Reading from the N-terminus, the 119-residue chain is Flagellar transcriptional regulator FlhD (119 aa).

This sequence belongs to the FlhD family. In terms of assembly, homodimer; disulfide-linked. Forms a heterohexamer composed of two FlhC and four FlhD subunits. Each FlhC binds a FlhD dimer, forming a heterotrimer, and a hexamer assembles by dimerization of two heterotrimers.

The protein resides in the cytoplasm. In terms of biological role, functions in complex with FlhC as a master transcriptional regulator that regulates transcription of several flagellar and non-flagellar operons by binding to their promoter region. Activates expression of class 2 flagellar genes, including fliA, which is a flagellum-specific sigma factor that turns on the class 3 genes. Also regulates genes whose products function in a variety of physiological pathways. This Shigella boydii serotype 4 (strain Sb227) protein is Flagellar transcriptional regulator FlhD.